A 620-amino-acid chain; its full sequence is Ferric/cupric reductase transmembrane component 7 (620 aa).

Over 1-45 (MIEERDLVLSNGIHCIADIHSELYARLKKESQAVTPWVYQKQYGK) the chain is Extracellular. The helical transmembrane segment at 46–66 (FVTYFVAVIIFLSLIKKLAFM) threads the bilayer. Topologically, residues 67–107 (YYDSSEEFLPEKKNSPTTPSVFLARIMTKLVAFNRYICYRK) are cytoplasmic. The helical transmembrane segment at 108-128 (FPTLIFSYLGIPTSVGTFLVV) threads the bilayer. Topologically, residues 129–167 (MATTLYTLLYCFVPHPFYRPCAGFGSPPLSVRAGIMAIS) are extracellular. Positions 161 to 320 (AGIMAISLVS…LAVKGYLRPG (160 aa)) constitute a Ferric oxidoreductase domain. A helical membrane pass occupies residues 168-188 (LVSFVFSLSGKINVIGWLVGL). The Cytoplasmic segment spans residues 189-194 (SYEKIN). Residues 195-215 (IYHQWASILCLFFSWVHVIPF) traverse the membrane as a helical segment. 2 residues coordinate heme: His-197 and His-211. The Extracellular segment spans residues 216–237 (LRQARHEGGYERMHQRWKASDM). A helical membrane pass occupies residues 238–258 (WRSGVPPILFLNLLWLSSLPI). Over 259-265 (ARRHFYE) the chain is Cytoplasmic. Residues 266 to 286 (IFLQLHWILAVGFYISLFYHV) traverse the membrane as a helical segment. Heme is bound by residues His-271 and His-285. Residues 287–292 (YPELNS) lie on the Extracellular side of the membrane. A helical membrane pass occupies residues 293-313 (HMYLVATIVVWFAQLFYRLAV). Topologically, residues 314–620 (KGYLRPGRSF…CYLHSESFGY (307 aa)) are cytoplasmic. Residues 321 to 419 (RSFMASTIAN…DGPYGGIERD (99 aa)) enclose the FAD-binding FR-type domain. 369 to 375 (HPFSIFP) lines the FAD pocket. Positions 519–544 (SDQSDLAKREKDTEFGQDDTESNSTF) are disordered. Residues 523-532 (DLAKREKDTE) show a composition bias toward basic and acidic residues.

The protein belongs to the ferric reductase (FRE) family. FAD is required as a cofactor.

It is found in the cell membrane. It catalyses the reaction 2 a Fe(II)-siderophore + NADP(+) + H(+) = 2 a Fe(III)-siderophore + NADPH. Its function is as follows. Cell surface metalloreductase. May be involved in copper homeostasis. The polypeptide is Ferric/cupric reductase transmembrane component 7 (FRE7) (Saccharomyces cerevisiae (strain YJM789) (Baker's yeast)).